Consider the following 618-residue polypeptide: Sodium-coupled monocarboxylate transporter 2 (618 aa).

Residues 1 to 9 (MEVKNFAVW) lie on the Extracellular side of the membrane. Residues 10–30 (DYVVFAALFFISSGIGVFFAI) traverse the membrane as a helical segment. At 31–47 (KERKKATSREFLVGGRQ) the chain is on the cytoplasmic side. The chain crosses the membrane as a helical span at residues 48–68 (MSFGPVGLSLTASFMSAVTVL). The Extracellular segment spans residues 69-82 (GTPSEVYRFGASFL). Residues 83 to 103 (VFFIAYLFVILLTSELFLPVF) traverse the membrane as a helical segment. The Cytoplasmic portion of the chain corresponds to 104–128 (YRSGITSTYEYLQLRFNKPVRYAAT). The helical transmembrane segment at 129 to 149 (VIYIVQTILYTGVVVYAPALA) threads the bilayer. Residues 150–157 (LNQVTGFD) lie on the Extracellular side of the membrane. A helical membrane pass occupies residues 158-178 (LWGSVFATGIVCTFYCTLGGL). The Cytoplasmic segment spans residues 179-180 (KA). The chain crosses the membrane as a helical span at residues 181-201 (VVWTDAFQMVVMIVGFLTVLI). The Extracellular portion of the chain corresponds to 202–235 (QGSTHAGGFHNVLEQSTNGSRLHIFDFDVDPLRR). A helical transmembrane segment spans residues 236-256 (HTFWTITVGGTFTWLGIYGVN). At 257 to 275 (QSTIQRCISCKTEKHAKLA) the chain is on the cytoplasmic side. Residues 276-296 (LYFNLLGLWIILVCAVFSGLI) traverse the membrane as a helical segment. Residues 297–321 (MYSHFKDCDPWTSGIISAPDQLMPY) are Extracellular-facing. A helical membrane pass occupies residues 322 to 342 (FVMEIFATMPGLPGLFVACAF). Topologically, residues 343 to 385 (SGTLSTVASSINALATVTFEDFVKSCFPHLSDKLSTWISKGLC) are cytoplasmic. A helical transmembrane segment spans residues 386 to 406 (LLFGVMCTSMAVAASVMGGVV). Over 407-411 (QASLS) the chain is Extracellular. The helical transmembrane segment at 412–432 (IHGMCGGPMLGLFSLGIVFPF) threads the bilayer. At 433–437 (VNWKG) the chain is on the cytoplasmic side. A helical membrane pass occupies residues 438-458 (ALGGLLTGITLSFWVAIGAFI). Topologically, residues 459-504 (YPAPASKTWPLPLSTDQCIKSNVTATGPPVLSSRPGIADTWYSISY) are extracellular. N480 carries an N-linked (GlcNAc...) asparagine glycan. The chain crosses the membrane as a helical span at residues 505 to 525 (LYYSAVGCLGCIVAGVIISLI). Topologically, residues 526–618 (TGRQRGEDIQ…NNMAFETTHF (93 aa)) are cytoplasmic.

It belongs to the sodium:solute symporter (SSF) (TC 2.A.21) family.

The protein resides in the apical cell membrane. It catalyses the reaction (S)-lactate(out) + Na(+)(out) = (S)-lactate(in) + Na(+)(in). It carries out the reaction nicotinate(out) + Na(+)(out) = nicotinate(in) + Na(+)(in). The enzyme catalyses pyruvate(out) + Na(+)(out) = pyruvate(in) + Na(+)(in). The catalysed reaction is propanoate(out) + Na(+)(out) = propanoate(in) + Na(+)(in). It catalyses the reaction butanoate(out) + Na(+)(out) = butanoate(in) + Na(+)(in). It carries out the reaction acetoacetate(out) + Na(+)(out) = acetoacetate(in) + Na(+)(in). Its activity is regulated as follows. Cotransport of monocarboxylates and nicotinate strongly inhibited by ibuprofen, fenoprofen and ketoprofen. Its function is as follows. Acts as an electroneutral and low-affinity sodium (Na(+))-dependent sodium-coupled solute transporter. Catalyzes the transport across the plasma membrane of many monocarboxylates such as lactate, pyruvate, nicotinate, propionate, butyrate and beta-D-hydroxybutyrate. May be responsible for the first step of reabsorption of monocarboxylates from the lumen of the proximal tubule of the kidney and the small intestine. May play also a role in monocarboxylates transport in the retina. The sequence is that of Sodium-coupled monocarboxylate transporter 2 from Homo sapiens (Human).